Consider the following 319-residue polypeptide: Acetyl esterase (319 aa).

The Involved in the stabilization of the negatively charged intermediate by the formation of the oxyanion hole motif lies at 91–93 (HGG). Catalysis depends on residues Ser165, Asp262, and His292.

Belongs to the 'GDXG' lipolytic enzyme family. As to quaternary structure, homodimer. Interacts with MalT and MelA.

Its subcellular location is the cytoplasm. Displays esterase activity towards short chain fatty esters (acyl chain length of up to 8 carbons). Able to hydrolyze triacetylglycerol (triacetin) and tributyrylglycerol (tributyrin), but not trioleylglycerol (triolein) or cholesterol oleate. Negatively regulates MalT activity by antagonizing maltotriose binding. Inhibits MelA galactosidase activity. In Escherichia coli O6:H1 (strain CFT073 / ATCC 700928 / UPEC), this protein is Acetyl esterase.